Here is a 407-residue protein sequence, read N- to C-terminus: Imidazolonepropionase (407 aa).

Residues His72 and His74 each contribute to the Fe(3+) site. Positions 72 and 74 each coordinate Zn(2+). 3 residues coordinate 4-imidazolone-5-propanoate: Arg81, Tyr144, and His177. Tyr144 provides a ligand contact to N-formimidoyl-L-glutamate. His242 lines the Fe(3+) pocket. Residue His242 participates in Zn(2+) binding. Gln245 contacts 4-imidazolone-5-propanoate. Asp317 serves as a coordination point for Fe(3+). Asp317 is a binding site for Zn(2+). The N-formimidoyl-L-glutamate site is built by Asn319 and Gly321. A 4-imidazolone-5-propanoate-binding site is contributed by Thr322.

Belongs to the metallo-dependent hydrolases superfamily. HutI family. Zn(2+) serves as cofactor. Fe(3+) is required as a cofactor.

It is found in the cytoplasm. The catalysed reaction is 4-imidazolone-5-propanoate + H2O = N-formimidoyl-L-glutamate. It functions in the pathway amino-acid degradation; L-histidine degradation into L-glutamate; N-formimidoyl-L-glutamate from L-histidine: step 3/3. Catalyzes the hydrolytic cleavage of the carbon-nitrogen bond in imidazolone-5-propanoate to yield N-formimidoyl-L-glutamate. It is the third step in the universal histidine degradation pathway. This is Imidazolonepropionase from Rhizobium rhizogenes (Agrobacterium rhizogenes).